A 302-amino-acid polypeptide reads, in one-letter code: Probable lipid kinase YegS-like (302 aa).

A DAGKc domain is found at 1 to 129 (MDKDKVLLVL…IDLGEVNGKL (129 aa)). Residues T39, 65–71 (GDGTLRE), and T92 each bind ATP. Mg(2+) contacts are provided by R210, D213, and L215. E268 (proton acceptor) is an active-site residue.

Belongs to the diacylglycerol/lipid kinase family. YegS lipid kinase subfamily. Mg(2+) serves as cofactor. Requires Ca(2+) as cofactor.

It localises to the cytoplasm. Probably phosphorylates lipids; the in vivo substrate is unknown. The chain is Probable lipid kinase YegS-like from Pseudomonas aeruginosa (strain ATCC 15692 / DSM 22644 / CIP 104116 / JCM 14847 / LMG 12228 / 1C / PRS 101 / PAO1).